The sequence spans 457 residues: tRNA modification GTPase MnmE (457 aa).

The (6S)-5-formyl-5,6,7,8-tetrahydrofolate site is built by arginine 25, glutamate 87, and arginine 126. Residues glycine 223–phenylalanine 377 enclose the TrmE-type G domain. Position 233 (asparagine 233) interacts with K(+). GTP contacts are provided by residues asparagine 233–serine 238, threonine 252–threonine 258, and aspartate 277–glycine 280. Serine 237 serves as a coordination point for Mg(2+). Residues threonine 252, isoleucine 254, and threonine 257 each contribute to the K(+) site. Threonine 258 provides a ligand contact to Mg(2+). Lysine 457 lines the (6S)-5-formyl-5,6,7,8-tetrahydrofolate pocket.

The protein belongs to the TRAFAC class TrmE-Era-EngA-EngB-Septin-like GTPase superfamily. TrmE GTPase family. Homodimer. Heterotetramer of two MnmE and two MnmG subunits. K(+) serves as cofactor.

It is found in the cytoplasm. Its function is as follows. Exhibits a very high intrinsic GTPase hydrolysis rate. Involved in the addition of a carboxymethylaminomethyl (cmnm) group at the wobble position (U34) of certain tRNAs, forming tRNA-cmnm(5)s(2)U34. The protein is tRNA modification GTPase MnmE of Streptococcus suis (strain 98HAH33).